A 532-amino-acid chain; its full sequence is FRIGIDA-like protein 4b (532 aa).

It belongs to the Frigida family. In terms of tissue distribution, expressed in leaves, shoot apex, flowers and during seed development.

In Arabidopsis thaliana (Mouse-ear cress), this protein is FRIGIDA-like protein 4b (FRL4B).